A 621-amino-acid chain; its full sequence is Glutamyl-tRNA(Gln) amidotransferase subunit E (621 aa).

This sequence belongs to the GatB/GatE family. GatE subfamily. As to quaternary structure, heterodimer of GatD and GatE.

The enzyme catalyses L-glutamyl-tRNA(Gln) + L-glutamine + ATP + H2O = L-glutaminyl-tRNA(Gln) + L-glutamate + ADP + phosphate + H(+). Its function is as follows. Allows the formation of correctly charged Gln-tRNA(Gln) through the transamidation of misacylated Glu-tRNA(Gln) in organisms which lack glutaminyl-tRNA synthetase. The reaction takes place in the presence of glutamine and ATP through an activated gamma-phospho-Glu-tRNA(Gln). The GatDE system is specific for glutamate and does not act on aspartate. This Methanobrevibacter smithii (strain ATCC 35061 / DSM 861 / OCM 144 / PS) protein is Glutamyl-tRNA(Gln) amidotransferase subunit E.